Consider the following 277-residue polypeptide: Phosphoenolpyruvate synthase regulatory protein (277 aa).

Position 157 to 164 (Gly-157 to Thr-164) interacts with ADP.

The protein belongs to the pyruvate, phosphate/water dikinase regulatory protein family. PSRP subfamily.

It carries out the reaction [pyruvate, water dikinase] + ADP = [pyruvate, water dikinase]-phosphate + AMP + H(+). The catalysed reaction is [pyruvate, water dikinase]-phosphate + phosphate + H(+) = [pyruvate, water dikinase] + diphosphate. Its function is as follows. Bifunctional serine/threonine kinase and phosphorylase involved in the regulation of the phosphoenolpyruvate synthase (PEPS) by catalyzing its phosphorylation/dephosphorylation. The sequence is that of Phosphoenolpyruvate synthase regulatory protein from Shigella boydii serotype 4 (strain Sb227).